A 98-amino-acid polypeptide reads, in one-letter code: MLETVPVRCVERKITSLVVDLSGVPIVDTMVAQQLYNLSKTLFLLGVKAVFSGIRPDVAQTSIQLGLDFSEYETYGTLKQALENMGVRCIVEELEENK.

An STAS domain is found at 1-85 (MLETVPVRCV…GTLKQALENM (85 aa)).

Post-translationally, phosphorylated on threonine residue(s). Phosphorylated by PrkC and dephosphorylated by PrpC.

It is found in the cytoplasm. This is an uncharacterized protein from Bacillus subtilis (strain 168).